Consider the following 258-residue polypeptide: Acyl-[acyl-carrier-protein]--UDP-N-acetylglucosamine O-acyltransferase (258 aa).

The protein belongs to the transferase hexapeptide repeat family. LpxA subfamily. As to quaternary structure, homotrimer.

Its subcellular location is the cytoplasm. The catalysed reaction is a (3R)-hydroxyacyl-[ACP] + UDP-N-acetyl-alpha-D-glucosamine = a UDP-3-O-[(3R)-3-hydroxyacyl]-N-acetyl-alpha-D-glucosamine + holo-[ACP]. The protein operates within glycolipid biosynthesis; lipid IV(A) biosynthesis; lipid IV(A) from (3R)-3-hydroxytetradecanoyl-[acyl-carrier-protein] and UDP-N-acetyl-alpha-D-glucosamine: step 1/6. Its function is as follows. Involved in the biosynthesis of lipid A, a phosphorylated glycolipid that anchors the lipopolysaccharide to the outer membrane of the cell. The chain is Acyl-[acyl-carrier-protein]--UDP-N-acetylglucosamine O-acyltransferase from Pseudomonas entomophila (strain L48).